A 451-amino-acid polypeptide reads, in one-letter code: tRNA-2-methylthio-N(6)-dimethylallyladenosine synthase (451 aa).

An MTTase N-terminal domain is found at 3–120 (LKLHIKTYGC…LPEMINHVRI (118 aa)). Cysteine 12, cysteine 49, cysteine 83, cysteine 157, cysteine 161, and cysteine 164 together coordinate [4Fe-4S] cluster. A Radical SAM core domain is found at 143 to 375 (QAKGPTAFVS…QECIRKQAMK (233 aa)). Positions 378–441 (QAMKGTVQCI…SNSLRGELIS (64 aa)) constitute a TRAM domain.

It belongs to the methylthiotransferase family. MiaB subfamily. Monomer. [4Fe-4S] cluster serves as cofactor.

The protein resides in the cytoplasm. The enzyme catalyses N(6)-dimethylallyladenosine(37) in tRNA + (sulfur carrier)-SH + AH2 + 2 S-adenosyl-L-methionine = 2-methylsulfanyl-N(6)-dimethylallyladenosine(37) in tRNA + (sulfur carrier)-H + 5'-deoxyadenosine + L-methionine + A + S-adenosyl-L-homocysteine + 2 H(+). Its function is as follows. Catalyzes the methylthiolation of N6-(dimethylallyl)adenosine (i(6)A), leading to the formation of 2-methylthio-N6-(dimethylallyl)adenosine (ms(2)i(6)A) at position 37 in tRNAs that read codons beginning with uridine. The protein is tRNA-2-methylthio-N(6)-dimethylallyladenosine synthase of Baumannia cicadellinicola subsp. Homalodisca coagulata.